We begin with the raw amino-acid sequence, 651 residues long: J domain-containing protein required for chloroplast accumulation response 1 (651 aa).

Residues 1–17 are compositionally biased toward polar residues; the sequence is MQTLPSSETVLLGSNSA. Disordered regions lie at residues 1–56, 114–138, 156–176, 250–291, and 308–526; these read MQTL…TRHS, GSRILSPAHKPESSSGTSSPSQFSL, LNKNKETVSSSPLSRTSSKAD, KLGK…TDLK, and KPLD…IDEP. Phosphoserine is present on serine 56. Residues 126–137 show a composition bias toward low complexity; the sequence is SSSGTSSPSQFS. Basic and acidic residues-rich tracts occupy residues 250–259, 281–291, 337–357, 405–416, 441–456, and 488–497; these read KLGKNEEGDG, TKEEKTETDLK, IFHEEDERQDEKIVSEREVRK, VGKDGVKGKVSD, RAKETPKTDIIHDGSN, and QKKDSDRESM. The stretch at 532 to 562 forms a coiled coil; sequence DVEDITQDENKMEEANKDAEEIKNIDAKIRK. The 66-residue stretch at 586–651 folds into the J domain; sequence SGWKPVPLMD…WDHFNTLGPV (66 aa).

In terms of tissue distribution, expressed in leaves and stems, but not in roots.

Its subcellular location is the cytoplasm. Required for chloroplast photorelocation movement; chloroplast accumulation upon low blue light and for chloroplast movement to the bottom of cells in darkness, by modulating chloroplast actin (Cp-actin) filaments distribution, appearance and disappearance. May mediate a slight resistance to aluminum in root hair cells. This chain is J domain-containing protein required for chloroplast accumulation response 1 (JAC1), found in Arabidopsis thaliana (Mouse-ear cress).